The primary structure comprises 860 residues: Ubiquitin fusion degradation protein 3 homolog (860 aa).

6 WD repeats span residues 27–65 (AHKSDTKALAVTQGGCLISGGRDETVKFWAKKGKQYTKT), 71–112 (PKGI…PYAI), 115–154 (EHKQNVCCLHINEKATHMLSGSWDSNVIIWPITELNSSSF), 163–203 (GHTL…SVFK), 204–242 (GHTDVVRALVVLSSSHFLSAGNDGHIIHWDVASASILRK), and 244–283 (ATQAHEFIYSMTLSDSHILTTGEDGTLEFWAIDGGKDGNL). The PFU domain occupies 397–497 (PIHYLEEITR…DKLSKGAASA (101 aa)). A disordered region spans residues 494 to 585 (AASAQSGYED…LPQNKKKPRG (92 aa)). Residues 586–856 (PLVPVPDFYI…KNIARDIVEM (271 aa)) form the PUL domain.

Belongs to the WD repeat PLAP family. In terms of assembly, interacts with cdc-48.1. Expressed in intestine (at protein level).

It is found in the cytoplasm. In terms of biological role, plays a role in protein ubiquitination, sorting and degradation through its association with cdc-48.1 and/or cdc-48.2. The protein is Ubiquitin fusion degradation protein 3 homolog of Caenorhabditis elegans.